A 403-amino-acid polypeptide reads, in one-letter code: Subtilisin-like protease CPC735_035780 (403 aa).

Positions 1-19 (MSIMKIATLFFAALSAVEA) are cleaved as a signal peptide. The propeptide occupies 20–117 (AKLLTPSDKR…VEPDRRVHLT (98 aa)). Residues 35–116 (SYIVVMKDNV…YVEPDRRVHL (82 aa)) enclose the Inhibitor I9 domain. A Peptidase S8 domain is found at 127 to 403 (SWGLGRISHR…NKLLYNNSGR (277 aa)). Active-site charge relay system residues include Asp159 and His190. N-linked (GlcNAc...) asparagine glycosylation is found at Asn233 and Asn251. Ser349 acts as the Charge relay system in catalysis. Asn399 carries N-linked (GlcNAc...) asparagine glycosylation.

This sequence belongs to the peptidase S8 family.

The protein resides in the secreted. In terms of biological role, secreted subtilisin-like serine protease with keratinolytic activity that contributes to pathogenicity. This is Subtilisin-like protease CPC735_035780 from Coccidioides posadasii (strain C735) (Valley fever fungus).